Here is a 167-residue protein sequence, read N- to C-terminus: N-alpha-acetyltransferase (167 aa).

The N-acetyltransferase domain occupies 12–167 (FTLRNARMDD…EDAYLMARPL (156 aa)). Tyrosine 37 contributes to the substrate binding site. Histidine 88 provides a ligand contact to Zn(2+). Acetyl-CoA contacts are provided by residues 92 to 94 (IAV) and 100 to 105 (RKGIAT). Glutamate 127 contacts Zn(2+). Acetyl-CoA is bound by residues asparagine 132 and 139-141 (YEK). Tyrosine 154 is a binding site for substrate.

The protein belongs to the acetyltransferase family. ARD1 subfamily. Homodimer.

It localises to the cytoplasm. It catalyses the reaction N-terminal L-alanyl-[protein] + acetyl-CoA = N-terminal N(alpha)-acetyl-L-alanyl-[protein] + CoA + H(+). The catalysed reaction is N-terminal L-seryl-[protein] + acetyl-CoA = N-terminal N(alpha)-acetyl-L-seryl-[protein] + CoA + H(+). It carries out the reaction N-terminal L-methionyl-L-leucyl-[protein] + acetyl-CoA = N-terminal N(alpha)-acetyl-L-methionyl-L-leucyl-[protein] + CoA + H(+). The enzyme catalyses N-terminal L-methionyl-L-glutamyl-[protein] + acetyl-CoA = N-terminal N(alpha)-acetyl-L-methionyl-L-glutamyl-[protein] + CoA + H(+). In terms of biological role, displays alpha (N-terminal) acetyltransferase activity. Catalyzes the covalent attachment of an acetyl moiety from acetyl-CoA to the free alpha-amino group at the N-terminus of a protein. NAT is able to acetylate the alpha-amino group of methionine, alanine and serine N-terminal residue substrates, however it has a preference for Ser-N-terminal substrates. The protein is N-alpha-acetyltransferase of Saccharolobus solfataricus (strain ATCC 35092 / DSM 1617 / JCM 11322 / P2) (Sulfolobus solfataricus).